Consider the following 171-residue polypeptide: Antimicrobial protein CAP18 (171 aa).

Positions 1-29 (METHKHGPSLAWWSLLLLLLGLLMPPAIA) are cleaved as a signal peptide. 2 disulfides stabilise this stretch: Cys-85-Cys-96 and Cys-107-Cys-124.

This sequence belongs to the cathelicidin family. In terms of tissue distribution, neutrophils.

Its subcellular location is the secreted. In terms of biological role, CAP18 binds to the lipid A moiety of bacterial lipopolysaccharides (LPS), a glycolipid present in the outer membrane of all Gram-negative bacteria. Has antibiotic activity. This chain is Antimicrobial protein CAP18 (CAP18), found in Oryctolagus cuniculus (Rabbit).